The following is a 60-amino-acid chain: Chromatin protein Cren7 (60 aa).

It belongs to the Cren7 family. Monomer. Post-translationally, methylated at multiple sites, to varying extents.

It localises to the chromosome. The protein localises to the cytoplasm. Its function is as follows. A chromatin protein, binds double-stranded DNA without sequence specificity. Constrains negative DNA supercoils. The polypeptide is Chromatin protein Cren7 (Saccharolobus islandicus (strain M.16.4 / Kamchatka #3) (Sulfolobus islandicus)).